The sequence spans 321 residues: Fe-S cluster assembly protein DRE2 (321 aa).

The N-terminal SAM-like domain stretch occupies residues 1-131 (MERMLLLSPP…KPDFGPENIV (131 aa)). Residues 132 to 213 (PLKLGKRKPV…EETLLDGEDM (82 aa)) are linker. 4 residues coordinate [2Fe-2S] cluster: Cys-223, Cys-234, Cys-237, and Cys-239. The segment at 223 to 239 (CRPKAGKRRRACKDCTC) is fe-S binding site A. Residues Cys-284, Cys-287, Cys-295, and Cys-298 each coordinate [4Fe-4S] cluster. Short sequence motifs (cx2C motif) lie at residues 284–287 (CGNC) and 295–298 (CDGC). The interval 284–298 (CGNCALGDAFRCDGC) is fe-S binding site B.

It belongs to the anamorsin family. In terms of assembly, monomer. Interacts with TAH18. Interacts with MIA40. The cofactor is [2Fe-2S] cluster. It depends on [4Fe-4S] cluster as a cofactor.

The protein resides in the cytoplasm. It is found in the mitochondrion intermembrane space. Component of the cytosolic iron-sulfur (Fe-S) protein assembly (CIA) machinery required for the maturation of extramitochondrial Fe-S proteins. Part of an electron transfer chain functioning in an early step of cytosolic Fe-S biogenesis, facilitating the de novo assembly of a [4Fe-4S] cluster on the scaffold complex CFD1-NBP35. Electrons are transferred to DRE2 from NADPH via the FAD- and FMN-containing protein TAH18. TAH18-DRE2 are also required for the assembly of the diferric tyrosyl radical cofactor of ribonucleotide reductase (RNR), probably by providing electrons for reduction during radical cofactor maturation in the catalytic small subunit RNR2. The protein is Fe-S cluster assembly protein DRE2 of Coccidioides immitis (strain RS) (Valley fever fungus).